Reading from the N-terminus, the 150-residue chain is Avidin-related protein 4/5 (150 aa).

The first 24 residues, 1-24, serve as a signal peptide directing secretion; the sequence is MVHTTSPLLLLLLLSLALVAPSLS. The region spanning 26 to 147 is the Avidin-like domain; the sequence is RKCSLTGKWT…GYNNFTRLCT (122 aa). Cys-28 and Cys-105 are disulfide-bonded. Biotin is bound by residues Asn-36, Ser-40, Tyr-57, Thr-59, and Asp-63. 2 N-linked (GlcNAc...) asparagine glycosylation sites follow: Asn-67 and Asn-93. The biotin site is built by Ser-95 and Asn-140. Residue Asn-141 is glycosylated (N-linked (GlcNAc...) asparagine).

The protein belongs to the avidin/streptavidin family. As to quaternary structure, homotetramer.

It localises to the secreted. In terms of biological role, forms a strong non-covalent specific complex with biotin. In Gallus gallus (Chicken), this protein is Avidin-related protein 4/5 (AVR4).